The chain runs to 665 residues: MTEFGLQAPFSPTGDQPSAIAQLVASIEGGNRYQTLLGATGTGKTFSIAAVIEKIGRPTLVLAHNKTLAAQLCNELREFFPNNAVEYFVSYYDYYQPEAYIPVTDTYIEKTAAINDEIDMLRHSATRSLFERRDVIVVASISCIYGLGIPAEYLKAAIPLQIGMEVNQREILRDLASVQYSRNDVEMGRGRFRVRGDVLEIGPAYEDRIIRVEFFGDEIDAIRYIDPVTGEIINSLQAVNIYPARHFVTPEERLEVACEDIAYELKQRKAELEETGKLVEAQRIDQRTRYDLEMLREVGYCNGVENYSRHLAGRQAGEPPESLIDYFPKDWLLVIDESHVTVPQIRGMYNGDQARKKVLIEHGFRLPSAADNRPLKAEEFWQKVNQCIFVSATPGNWELEISENRIVEQVIRPTGVIDPEISVRPTEGQIDDLLGEIKDRIDLHERVLITTLTKRMAEDLTEYLQEHGVKVRYLHSEINSIQRIEILQDLRQGSFDVLVGVNLLREGLDLPEVSLVAIMDADKEGFLRAERSLIQTIGRAARHIRGQAILYADNMTDSMIKAIEETDRRRGIQVAYNKLHGITPQPIVKKSSNAILSFLEVSRRLNATDLKVVEEHIDELPLEEIPNLIDKLEAQMKEASKKLEFEEAAKLRDRIKQLRDKLVGR.

In terms of domain architecture, Helicase ATP-binding spans 25–412 (ASIEGGNRYQ…ENRIVEQVIR (388 aa)). 38 to 45 (GATGTGKT) contributes to the ATP binding site. The Beta-hairpin signature appears at 91–114 (YYDYYQPEAYIPVTDTYIEKTAAI). The region spanning 429–583 (QIDDLLGEIK…VAYNKLHGIT (155 aa)) is the Helicase C-terminal domain. In terms of domain architecture, UVR spans 626 to 661 (PNLIDKLEAQMKEASKKLEFEEAAKLRDRIKQLRDK).

This sequence belongs to the UvrB family. As to quaternary structure, forms a heterotetramer with UvrA during the search for lesions. Interacts with UvrC in an incision complex.

Its subcellular location is the cytoplasm. In terms of biological role, the UvrABC repair system catalyzes the recognition and processing of DNA lesions. A damage recognition complex composed of 2 UvrA and 2 UvrB subunits scans DNA for abnormalities. Upon binding of the UvrA(2)B(2) complex to a putative damaged site, the DNA wraps around one UvrB monomer. DNA wrap is dependent on ATP binding by UvrB and probably causes local melting of the DNA helix, facilitating insertion of UvrB beta-hairpin between the DNA strands. Then UvrB probes one DNA strand for the presence of a lesion. If a lesion is found the UvrA subunits dissociate and the UvrB-DNA preincision complex is formed. This complex is subsequently bound by UvrC and the second UvrB is released. If no lesion is found, the DNA wraps around the other UvrB subunit that will check the other stand for damage. The chain is UvrABC system protein B from Nostoc sp. (strain PCC 7120 / SAG 25.82 / UTEX 2576).